A 602-amino-acid polypeptide reads, in one-letter code: Elongation factor 4 (602 aa).

The tr-type G domain occupies 7–189 (SRLRNFCIIA…AVVERVPPPK (183 aa)). GTP contacts are provided by residues 19–24 (DHGKST) and 136–139 (NKVD).

This sequence belongs to the TRAFAC class translation factor GTPase superfamily. Classic translation factor GTPase family. LepA subfamily.

The protein resides in the cell inner membrane. It carries out the reaction GTP + H2O = GDP + phosphate + H(+). In terms of biological role, required for accurate and efficient protein synthesis under certain stress conditions. May act as a fidelity factor of the translation reaction, by catalyzing a one-codon backward translocation of tRNAs on improperly translocated ribosomes. Back-translocation proceeds from a post-translocation (POST) complex to a pre-translocation (PRE) complex, thus giving elongation factor G a second chance to translocate the tRNAs correctly. Binds to ribosomes in a GTP-dependent manner. The chain is Elongation factor 4 from Prochlorococcus marinus (strain MIT 9211).